Reading from the N-terminus, the 320-residue chain is Protein U25 (320 aa).

This sequence belongs to the herpesviridae US22 family.

In Human herpesvirus 7 (strain JI) (HHV-7), this protein is Protein U25 (U25).